We begin with the raw amino-acid sequence, 231 residues long: Ion-translocating oxidoreductase complex subunit E (231 aa).

6 helical membrane passes run 18 to 38 (ALVQLLGLCPLLAVTSTATNA), 39 to 59 (LGLGLATTLVLTLTNLTISTL), 63 to 83 (TPAEIRIPIYVMIIASVVSAV), 86 to 106 (LINAYAFGLYQSLGIFIPLIV), 125 to 145 (ALSALDGFSIGMGATCAMFVL), and 182 to 202 (PFLLAMLPPSAFIGLGLMLAG).

This sequence belongs to the NqrDE/RnfAE family. The complex is composed of six subunits: RsxA, RsxB, RsxC, RsxD, RsxE and RsxG.

It localises to the cell inner membrane. Part of a membrane-bound complex that couples electron transfer with translocation of ions across the membrane. Required to maintain the reduced state of SoxR. The polypeptide is Ion-translocating oxidoreductase complex subunit E (Escherichia coli O7:K1 (strain IAI39 / ExPEC)).